A 313-amino-acid chain; its full sequence is Ribose-phosphate pyrophosphokinase (313 aa).

ATP-binding positions include 40–42 and 98–99; these read DGE and RQ. Positions 132 and 172 each coordinate Mg(2+). Lys-195 is a catalytic residue. Residues Arg-197, Asp-221, and 225 to 229 contribute to the D-ribose 5-phosphate site; that span reads DTAGT.

This sequence belongs to the ribose-phosphate pyrophosphokinase family. Class I subfamily. Homohexamer. It depends on Mg(2+) as a cofactor.

The protein localises to the cytoplasm. The catalysed reaction is D-ribose 5-phosphate + ATP = 5-phospho-alpha-D-ribose 1-diphosphate + AMP + H(+). It participates in metabolic intermediate biosynthesis; 5-phospho-alpha-D-ribose 1-diphosphate biosynthesis; 5-phospho-alpha-D-ribose 1-diphosphate from D-ribose 5-phosphate (route I): step 1/1. Functionally, involved in the biosynthesis of the central metabolite phospho-alpha-D-ribosyl-1-pyrophosphate (PRPP) via the transfer of pyrophosphoryl group from ATP to 1-hydroxyl of ribose-5-phosphate (Rib-5-P). The protein is Ribose-phosphate pyrophosphokinase of Porphyromonas gingivalis (strain ATCC BAA-308 / W83).